The sequence spans 586 residues: Glutathione hydrolase 5 proenzyme (586 aa).

Over 1–8 the chain is Cytoplasmic; sequence MARGYGAT. Residues 9–29 traverse the membrane as a helical; Signal-anchor for type II membrane protein segment; the sequence is VSLVLLGLGLALAVIVLAVVL. Over 30 to 586 the chain is Extracellular; the sequence is SRHQAPCGPQ…LRKSGEAAGY (557 aa). An N-linked (GlcNAc...) asparagine glycan is attached at N98. R110 contacts L-glutamate. N204, N303, and N347 each carry an N-linked (GlcNAc...) asparagine glycan. T388 (nucleophile) is an active-site residue. L-glutamate is bound by residues T406, E427, and 469 to 470; that span reads SS. 2 N-linked (GlcNAc...) asparagine glycosylation sites follow: N535 and N550.

It belongs to the gamma-glutamyltransferase family. As to quaternary structure, heterodimer composed of the light and heavy chains. The active site is located in the light chain. Cleaved by autocatalysis into a large and a small subunit. Post-translationally, glycosylated. In terms of tissue distribution, expressed in follicular dendritic cells in lymphoid follicles (at protein level).

It is found in the membrane. The catalysed reaction is glutathione + H2O = L-cysteinylglycine + L-glutamate. It catalyses the reaction an S-substituted glutathione + H2O = an S-substituted L-cysteinylglycine + L-glutamate. The enzyme catalyses leukotriene C4 + H2O = leukotriene D4 + L-glutamate. It carries out the reaction S-[(2E,6E,10E)-geranylgeranyl]-L-glutathione + H2O = S-[(2E,6E,10E)-geranylgeranyl]-L-cysteinylglycine + L-glutamate. The catalysed reaction is an N-terminal (5-L-glutamyl)-[peptide] + an alpha-amino acid = 5-L-glutamyl amino acid + an N-terminal L-alpha-aminoacyl-[peptide]. Its pathway is sulfur metabolism; glutathione metabolism. It functions in the pathway lipid metabolism; leukotriene D4 biosynthesis. With respect to regulation, inhibited by serine-borate. Its function is as follows. Cleaves the gamma-glutamyl bond of extracellular glutathione tripeptide (gamma-Glu-Cys-Gly) and certain glutathione conjugates. Hydrolyzes glutathione releasing L-Glu and Cys-Gly dipeptide which is further metabolized to maintain extracellular cysteine levels but also to provide cysteine necessary for intracellular glutathione synthesis. Among glutathione-S-conjugates metabolizes leukotriene C4 (LTC4) and S-geranylgeranyl-glutathione (GGG), but is inactive toward gamma-glutamyl leucine. Converts extracellular LTC4 to LTD4 during acute inflammatory response. Acts as a negative regulator of GGG bioactivity. GGT5 (via GGG catabolism) and ABCC1 (via extracellular transport) establish GGG gradients within lymphoid tissues to position P2RY8-positive lymphocytes at germinal centers in lymphoid follicles and restrict their chemotactic transmigration from blood vessels to bone marrow parenchyma. The transpeptidation reaction, i.e. the transfer of gamma-glutamyl moiety to an acceptor molecule to yield a new gamma-glutamyl compound requires high concentration of dipeptide acceptor and is considered nonphysiological. This is Glutathione hydrolase 5 proenzyme (GGT5) from Homo sapiens (Human).